A 542-amino-acid polypeptide reads, in one-letter code: Membrane protein insertase YidC (542 aa).

Transmembrane regions (helical) follow at residues 6 to 26 (NILL…WQTD), 326 to 346 (LVVD…LLMF), 350 to 370 (FVGN…GMLY), 421 to 441 (GGCL…WVLL), 458 to 478 (LSVQ…MFLM), and 501 to 521 (VIFT…WLVG).

It belongs to the OXA1/ALB3/YidC family. Type 1 subfamily. As to quaternary structure, interacts with the Sec translocase complex via SecD. Specifically interacts with transmembrane segments of nascent integral membrane proteins during membrane integration.

The protein localises to the cell inner membrane. Required for the insertion and/or proper folding and/or complex formation of integral membrane proteins into the membrane. Involved in integration of membrane proteins that insert both dependently and independently of the Sec translocase complex, as well as at least some lipoproteins. Aids folding of multispanning membrane proteins. The protein is Membrane protein insertase YidC of Shewanella loihica (strain ATCC BAA-1088 / PV-4).